An 834-amino-acid polypeptide reads, in one-letter code: WPP domain-associated protein (834 aa).

3 coiled-coil regions span residues 410 to 456 (SFGN…RLQH), 574 to 700 (SLDT…VLAI), and 792 to 812 (AEAEVDLLGDEVDTLLSLVEK).

As to quaternary structure, interacts with MAF1. As to expression, expressed in seedlings, leaves and fruits.

Its subcellular location is the golgi apparatus. The protein localises to the cytoplasm. The sequence is that of WPP domain-associated protein (WAP) from Solanum lycopersicum (Tomato).